The chain runs to 842 residues: ATP-binding cassette sub-family B member 6 (842 aa).

The Lumenal portion of the chain corresponds to 1 to 26; sequence MVTVGNYCETEGPAGPAWTQNGLSPC. The interval 1–205 is required for the lysosomal targeting; it reads MVTVGNYCET…SGGLFILGLW (205 aa). The interval 1 to 236 is required for ATPase activity; sequence MVTVGNYCET…GNQGRSTDRR (236 aa). Cys-8 and Cys-26 are joined by a disulfide. A helical transmembrane segment spans residues 27–47; the sequence is FFFTLVPSTLLTLGVLALVLV. Topologically, residues 48–72 are cytoplasmic; it reads LPRRRREVPAGPEELSWAAGPRVAP. The helical transmembrane segment at 73-93 threads the bilayer; that stretch reads YVLQLFLATLQMALPLAGLAG. Residues 94–106 lie on the Lumenal side of the membrane; the sequence is RVGTARGVRLPGY. A helical transmembrane segment spans residues 107–127; it reads LLLASVLESLASVCGLWLLVV. Residues 128–147 are Cytoplasmic-facing; the sequence is ERSQARQSLAMGVWMKFRHS. The helical transmembrane segment at 148-168 threads the bilayer; the sequence is LGLLLLWTVTFAAENLALVSW. Residues 169-185 lie on the Lumenal side of the membrane; it reads NSPQWWWARADLGQQVQ. A helical membrane pass occupies residues 186-206; that stretch reads FGLWVLRYVTSGGLFILGLWA. Topologically, residues 207–263 are cytoplasmic; it reads PGLRPQSYTLHVHEEDQDVGGNQGRSTDRRSTWRDLGRKLRLLSSYLWPRGSPSLQL. Residues 264 to 284 traverse the membrane as a helical segment; the sequence is IVLICLGLMGLERALNVLVPI. One can recognise an ABC transmembrane type-1 domain in the interval 265–556; sequence VLICLGLMGL…FGTYYRMIQT (292 aa). Residues 285–291 are Lumenal-facing; sequence FYRDIVN. Residues 292 to 312 form a helical membrane-spanning segment; it reads LLTAKAPWSSLAWTVTTYVFL. At 313-375 the chain is on the cytoplasmic side; the sequence is KFLQGGGTGS…TGEVLRIVDR (63 aa). Residues 376–396 traverse the membrane as a helical segment; it reads GTSSVTGLLSYLVFSIIPTLA. Asp-397 is a topological domain (lumenal). The helical transmembrane segment at 398–418 threads the bilayer; the sequence is IIIGIIYFSMFFNAWFGLIVF. Over 419-499 the chain is Cytoplasmic; that stretch reads LCMSLYLILT…STASLVVLNQ (81 aa). The helical transmembrane segment at 500–520 threads the bilayer; that stretch reads TQNLVIGLGLLAGSLLCAYFV. The Lumenal segment spans residues 521 to 529; it reads SEQKLQVGD. The chain crosses the membrane as a helical span at residues 530–550; it reads FVLFGTYITQLYMPLNWFGTY. Residues 551–842 lie on the Cytoplasmic side of the membrane; it reads YRMIQTNFID…PEESKPQDTA (292 aa). In terms of domain architecture, ABC transporter spans 590–824; that stretch reads IEFENVHFSY…GGVYAEMWQL (235 aa). Residues Tyr-599 and 623–634 contribute to the ATP site; that span reads GPSGAGKSTILR.

This sequence belongs to the ABC transporter superfamily. ABCB family. Heavy Metal importer (TC 3.A.1.210) subfamily. Homodimer. Post-translationally, N-glycosylated.

The protein localises to the cell membrane. It localises to the mitochondrion outer membrane. The protein resides in the endoplasmic reticulum membrane. Its subcellular location is the golgi apparatus membrane. It is found in the endosome membrane. The protein localises to the lysosome membrane. It localises to the late endosome membrane. The protein resides in the early endosome membrane. Its subcellular location is the secreted. It is found in the extracellular exosome. The protein localises to the mitochondrion. It localises to the endosome. The protein resides in the multivesicular body membrane. Its subcellular location is the melanosome membrane. It catalyses the reaction coproporphyrin III(in) + ATP + H2O = coproporphyrin III(out) + ADP + phosphate + H(+). It carries out the reaction coproporphyrinogen III(in) + ATP + H2O = coproporphyrinogen III(out) + ADP + phosphate + H(+). The enzyme catalyses heme b(in) + ATP + H2O = heme b(out) + ADP + phosphate + H(+). The catalysed reaction is pheophorbide a(in) + ATP + H2O = pheophorbide a(out) + ADP + phosphate + H(+). It catalyses the reaction protoporphyrin IX(in) + ATP + H2O = protoporphyrin IX(out) + ADP + phosphate + H(+). It carries out the reaction coproporphyrin I(in) + ATP + H2O = coproporphyrin I(out) + ADP + phosphate + H(+). The enzyme catalyses uroporphyrin I(in) + ATP + H2O = uroporphyrin I(out) + ADP + phosphate + H(+). The catalysed reaction is uroporphyrin III(in) + ATP + H2O = uroporphyrin III(out) + ADP + phosphate + H(+). In terms of biological role, ATP-dependent transporter that catalyzes the transport of a broad-spectrum of porphyrins from the cytoplasm to the extracellular space through the plasma membrane or into the vesicle lumen. May also function as an ATP-dependent importer of porphyrins from the cytoplasm into the mitochondria, in turn may participate in the de novo heme biosynthesis regulation and in the coordination of heme and iron homeostasis during phenylhydrazine stress. May play a key role in the early steps of melanogenesis producing PMEL amyloid fibrils. In vitro, it confers to cells a resistance to toxic metal such as arsenic and cadmium and against chemotherapeutics agent such as 5-fluorouracil, SN-38 and vincristin. In addition may play a role in the transition metal homeostasis. The protein is ATP-binding cassette sub-family B member 6 of Mus musculus (Mouse).